Here is a 262-residue protein sequence, read N- to C-terminus: Acyl-[acyl-carrier-protein]--UDP-N-acetylglucosamine O-acyltransferase (262 aa).

Belongs to the transferase hexapeptide repeat family. LpxA subfamily. Homotrimer.

It is found in the cytoplasm. The enzyme catalyses a (3R)-hydroxyacyl-[ACP] + UDP-N-acetyl-alpha-D-glucosamine = a UDP-3-O-[(3R)-3-hydroxyacyl]-N-acetyl-alpha-D-glucosamine + holo-[ACP]. Its pathway is glycolipid biosynthesis; lipid IV(A) biosynthesis; lipid IV(A) from (3R)-3-hydroxytetradecanoyl-[acyl-carrier-protein] and UDP-N-acetyl-alpha-D-glucosamine: step 1/6. Involved in the biosynthesis of lipid A, a phosphorylated glycolipid that anchors the lipopolysaccharide to the outer membrane of the cell. This Salmonella dublin (strain CT_02021853) protein is Acyl-[acyl-carrier-protein]--UDP-N-acetylglucosamine O-acyltransferase.